The chain runs to 355 residues: UDP-N-acetylglucosamine--N-acetylmuramyl-(pentapeptide) pyrophosphoryl-undecaprenol N-acetylglucosamine transferase (355 aa).

UDP-N-acetyl-alpha-D-glucosamine is bound by residues 15–17, Asn127, Arg163, Ser191, Ile244, 263–268, and Gln288; these read TGG and ALTVSE.

The protein belongs to the glycosyltransferase 28 family. MurG subfamily.

The protein resides in the cell inner membrane. The catalysed reaction is di-trans,octa-cis-undecaprenyl diphospho-N-acetyl-alpha-D-muramoyl-L-alanyl-D-glutamyl-meso-2,6-diaminopimeloyl-D-alanyl-D-alanine + UDP-N-acetyl-alpha-D-glucosamine = di-trans,octa-cis-undecaprenyl diphospho-[N-acetyl-alpha-D-glucosaminyl-(1-&gt;4)]-N-acetyl-alpha-D-muramoyl-L-alanyl-D-glutamyl-meso-2,6-diaminopimeloyl-D-alanyl-D-alanine + UDP + H(+). It participates in cell wall biogenesis; peptidoglycan biosynthesis. In terms of biological role, cell wall formation. Catalyzes the transfer of a GlcNAc subunit on undecaprenyl-pyrophosphoryl-MurNAc-pentapeptide (lipid intermediate I) to form undecaprenyl-pyrophosphoryl-MurNAc-(pentapeptide)GlcNAc (lipid intermediate II). This chain is UDP-N-acetylglucosamine--N-acetylmuramyl-(pentapeptide) pyrophosphoryl-undecaprenol N-acetylglucosamine transferase, found in Escherichia coli O9:H4 (strain HS).